The primary structure comprises 225 residues: Transcriptional regulatory protein CssR (225 aa).

The 114-residue stretch at Thr-4–Leu-117 folds into the Response regulatory domain. At Asp-52 the chain carries 4-aspartylphosphate. The ompR/PhoB-type DNA-binding region spans Lys-129–Ser-224.

Post-translationally, phosphorylated by CssS.

The protein localises to the cytoplasm. Its function is as follows. Member of the two-component regulatory system CssS/CssR required to control the cellular response to secretion stress. The protein is Transcriptional regulatory protein CssR (cssR) of Bacillus subtilis (strain 168).